Here is a 363-residue protein sequence, read N- to C-terminus: Chorismate synthase (363 aa).

An NADP(+)-binding site is contributed by R48. FMN contacts are provided by residues 125–127 (RSS), 238–239 (NA), G278, 293–297 (KPTAS), and R319.

The protein belongs to the chorismate synthase family. Homotetramer. FMNH2 is required as a cofactor.

The enzyme catalyses 5-O-(1-carboxyvinyl)-3-phosphoshikimate = chorismate + phosphate. The protein operates within metabolic intermediate biosynthesis; chorismate biosynthesis; chorismate from D-erythrose 4-phosphate and phosphoenolpyruvate: step 7/7. Functionally, catalyzes the anti-1,4-elimination of the C-3 phosphate and the C-6 proR hydrogen from 5-enolpyruvylshikimate-3-phosphate (EPSP) to yield chorismate, which is the branch point compound that serves as the starting substrate for the three terminal pathways of aromatic amino acid biosynthesis. This reaction introduces a second double bond into the aromatic ring system. This is Chorismate synthase from Acinetobacter baumannii (strain SDF).